A 262-amino-acid polypeptide reads, in one-letter code: Capsid protein (262 aa).

The disordered stretch occupies residues Ala183–Lys262. The short motif at Arg215–Arg233 is the Bipartite nuclear localization signal element. Residues Arg215 to Glu234 show a composition bias toward basic residues. Residues Ser232, Ser239, and Ser245 each carry the phosphoserine; by host modification. A compositionally biased stretch (basic residues) spans Ser252–Lys262. The RNA binding stretch occupies residues His254 to Pro260.

The protein belongs to the avihepadnavirus core antigen family. Homodimerizes, then multimerizes.

The protein resides in the virion. It localises to the host cytoplasm. Functionally, self assembles to form an icosahedral capsid. Most capsid appear to be large particles with an icosahedral symmetry of T=4 and consist of 240 copies of capsid protein, though a fraction forms smaller T=3 particles consisting of 180 capsid proteins. Entering capsid are transported along microtubules to the nucleus. Phosphorylation of the capsid is thought to induce exposure of nuclear localization signal in the C-terminal portion of the capsid protein that allows binding to the nuclear pore complex via the importin (karyopherin-) alpha and beta. Capsids are imported in intact form through the nuclear pore into the nuclear basket, where it probably binds NUP153. Only capsids that contain the mature viral genome can release the viral DNA and capsid protein into the nucleoplasm. Immature capsids get stucked in the basket. Capsids encapsulate the pre-genomic RNA and the P protein. Pre-genomic RNA is reverse transcribed into DNA while the capsid is still in the cytoplasm. The capsid can then either be directed to the nucleus, providing more genome for transcription, or bud through the endoplasmic reticulum to provide new virions. This Anas (ducks) protein is Capsid protein (C).